Reading from the N-terminus, the 357-residue chain is Prostaglandin E2 receptor EP2 subtype (357 aa).

At 1–24 the chain is on the extracellular side; the sequence is MDNSFNDSRRVENCESRQYLLSDE. N-linked (GlcNAc...) asparagine glycosylation is present at asparagine 6. Residues 25-48 form a helical membrane-spanning segment; the sequence is SPAISSVMFTAGVLGNLIALALLA. At 49–66 the chain is on the cytoplasmic side; the sequence is RRWRGDTGCSAGSRTSIS. Residues 67-92 form a helical membrane-spanning segment; sequence LFHVLVTELVLTDLLGTCLISPVVLA. Residues 93 to 112 are Extracellular-facing; it reads SYSRNQTLVALAPESRACTY. Cysteine 110 and cysteine 188 are disulfide-bonded. The helical transmembrane segment at 113–133 threads the bilayer; it reads FAFTMTFFSLATMLMLFAMAL. At 134-152 the chain is on the cytoplasmic side; sequence ERYLAIGHPYFYRRRVSRR. A helical transmembrane segment spans residues 153-177; it reads GGLAVLPAIYGVSLLFCSLPLLNYG. The Extracellular portion of the chain corresponds to 178 to 199; sequence EYVQYCPGTWCFIQHGRTAYLQ. A helical transmembrane segment spans residues 200 to 224; the sequence is LYATVLLLLIVAVLGCNISVILNLI. The Cytoplasmic portion of the chain corresponds to 225–262; it reads RMQLRSKRSRCGLSGSSLRGPGSRRRGERTSMAEETDH. A compositionally biased stretch (low complexity) spans 235-245; the sequence is CGLSGSSLRGP. Positions 235-255 are disordered; that stretch reads CGLSGSSLRGPGSRRRGERTS. Residues 263–286 traverse the membrane as a helical segment; that stretch reads LILLAIMTITFAVCSLPFTIFAYM. The Extracellular portion of the chain corresponds to 287-299; it reads DETSSRKEKWDLR. A helical membrane pass occupies residues 300 to 323; the sequence is ALRFLSVNSIIDPWVFVILRPPVL. Residues 324-357 are Cytoplasmic-facing; it reads RLMRSVLCCRTSLRAPEAPGASCSTQQTDLCGQL.

Belongs to the G-protein coupled receptor 1 family.

The protein localises to the cell membrane. Receptor for prostaglandin E2 (PGE2). The activity of this receptor is mediated by G(s) proteins that stimulate adenylate cyclase. The subsequent raise in intracellular cAMP is responsible for the relaxing effect of this receptor on smooth muscle. This is Prostaglandin E2 receptor EP2 subtype (Ptger2) from Rattus norvegicus (Rat).